The following is a 196-amino-acid chain: Adenylate kinase (196 aa).

9–17 contacts ATP; sequence GIPGVGKST.

The protein belongs to the archaeal adenylate kinase family.

It localises to the cytoplasm. The catalysed reaction is AMP + ATP = 2 ADP. The protein is Adenylate kinase of Pyrococcus furiosus (strain ATCC 43587 / DSM 3638 / JCM 8422 / Vc1).